Reading from the N-terminus, the 332-residue chain is MSRILDNEMMGDEELVERTLRPQYLREYIGQDKVKDQLQIFIEAAKMRDEALDHVLLFGPPGLGKTTMAFVIANELGVNLKQTSGPVIEKAGDLVAILNELEPGDVLFIDEIHRLPMSVEEVLYSAMEDFYIDIMIGAGEGSRSVHLELPPFTLIGATTRAGMLSNPLRARFGITGHMEYYAHADLTEIVERTADIFEMEITHEAASELALRSRGTPRIANRLLKRVRDFAQIMGNGVIDDIITDKALTMLDVDHEGLDYVDQKILRTMIEMYSGGPVGLGTLSVNIAEERETVEDMYEPYLIQKGFIMRTRSGRVATAKAYEHLGYEYSEK.

The large ATPase domain (RuvB-L) stretch occupies residues 1–181 (MSRILDNEMM…FGITGHMEYY (181 aa)). ATP contacts are provided by residues Leu20, Arg21, Gly62, Lys65, Thr66, Thr67, 128 to 130 (EDF), Arg171, Tyr181, and Arg218. A Mg(2+)-binding site is contributed by Thr66. Residues 182-252 (AHADLTEIVE…ITDKALTMLD (71 aa)) are small ATPAse domain (RuvB-S). A head domain (RuvB-H) region spans residues 255-332 (HEGLDYVDQK…EHLGYEYSEK (78 aa)). DNA-binding residues include Arg291, Arg310, Arg312, and Arg315.

This sequence belongs to the RuvB family. As to quaternary structure, homohexamer. Forms an RuvA(8)-RuvB(12)-Holliday junction (HJ) complex. HJ DNA is sandwiched between 2 RuvA tetramers; dsDNA enters through RuvA and exits via RuvB. An RuvB hexamer assembles on each DNA strand where it exits the tetramer. Each RuvB hexamer is contacted by two RuvA subunits (via domain III) on 2 adjacent RuvB subunits; this complex drives branch migration. In the full resolvosome a probable DNA-RuvA(4)-RuvB(12)-RuvC(2) complex forms which resolves the HJ.

It localises to the cytoplasm. It carries out the reaction ATP + H2O = ADP + phosphate + H(+). The RuvA-RuvB-RuvC complex processes Holliday junction (HJ) DNA during genetic recombination and DNA repair, while the RuvA-RuvB complex plays an important role in the rescue of blocked DNA replication forks via replication fork reversal (RFR). RuvA specifically binds to HJ cruciform DNA, conferring on it an open structure. The RuvB hexamer acts as an ATP-dependent pump, pulling dsDNA into and through the RuvAB complex. RuvB forms 2 homohexamers on either side of HJ DNA bound by 1 or 2 RuvA tetramers; 4 subunits per hexamer contact DNA at a time. Coordinated motions by a converter formed by DNA-disengaged RuvB subunits stimulates ATP hydrolysis and nucleotide exchange. Immobilization of the converter enables RuvB to convert the ATP-contained energy into a lever motion, pulling 2 nucleotides of DNA out of the RuvA tetramer per ATP hydrolyzed, thus driving DNA branch migration. The RuvB motors rotate together with the DNA substrate, which together with the progressing nucleotide cycle form the mechanistic basis for DNA recombination by continuous HJ branch migration. Branch migration allows RuvC to scan DNA until it finds its consensus sequence, where it cleaves and resolves cruciform DNA. This Streptococcus pneumoniae serotype 19F (strain G54) protein is Holliday junction branch migration complex subunit RuvB.